The sequence spans 442 residues: Glutamyl-tRNA reductase (442 aa).

Residues 50–53 (TCNR), Ser-109, 114–116 (EPQ), and Gln-120 contribute to the substrate site. The Nucleophile role is filled by Cys-51. Position 189–194 (189–194 (GAGEMA)) interacts with NADP(+).

This sequence belongs to the glutamyl-tRNA reductase family. In terms of assembly, homodimer.

The enzyme catalyses (S)-4-amino-5-oxopentanoate + tRNA(Glu) + NADP(+) = L-glutamyl-tRNA(Glu) + NADPH + H(+). It functions in the pathway porphyrin-containing compound metabolism; protoporphyrin-IX biosynthesis; 5-aminolevulinate from L-glutamyl-tRNA(Glu): step 1/2. Functionally, catalyzes the NADPH-dependent reduction of glutamyl-tRNA(Glu) to glutamate 1-semialdehyde (GSA). The polypeptide is Glutamyl-tRNA reductase (Nitratidesulfovibrio vulgaris (strain DSM 19637 / Miyazaki F) (Desulfovibrio vulgaris)).